A 531-amino-acid polypeptide reads, in one-letter code: MSKDYRSLANLSPFELKDELIKVASGKANRLMLNAGRGNPNFLATTPRRAFFRLGLFAAAESELSYSYMTVGVGGLAKLDGIEGRFERFIAEHRDQEGVKFLGKSLSYVRDQLGLDPAAFLHEMVDGILGCNYPVPPRMLTVSEQIVRQYIVREMAGGAVPPESVDLFAVEGGTAAMAYIFESLRISGLLKAGDKVAIGMPVFTPYIEIPELAQYDLKEVPIHADPDNGWQYSDAELDKLKDPDVKIFFCVNPSNPPSVKMDQRSLDRVRAIVAEQRPDLLILTDDVYGTFADEFQSLFSVCPRNTLLVYSFSKYFGATGWRLGVIAAHKDNVFDHALSQLPESAKKALDHRYRSLLPDVRSLKFIDRLVADSRVVALNHTAGLSTPQQVQMVLFSLFALMDEADAYKQALKQLIRRREATLYRELGMPPLENPNSVNYYTLIDLQNVTCRLYGEAFSQWAVQQSSTGDMLFRVADETGIVLLPGRGFGSDRPSGRASLANLNEYEYAAIGRALRRLADELYEQYKALGKE.

Positions 114 and 255 each coordinate L-aspartate. Lys-314 carries the N6-(pyridoxal phosphate)lysine modification. Arg-496 lines the L-aspartate pocket.

Belongs to the class-I pyridoxal-phosphate-dependent aminotransferase family. In terms of assembly, homododecamer. Pyridoxal 5'-phosphate is required as a cofactor.

It carries out the reaction L-aspartate + H(+) = L-alanine + CO2. The catalysed reaction is L-aspartate + 2-oxoglutarate = oxaloacetate + L-glutamate. With respect to regulation, inhibited by 10 mM Co(2+), Mn(2+) and Ni(2+), and by 1 mM Cu(2+) and Hg(2+). Its function is as follows. Bifunctional enzyme that has both L-aspartate decarboxylase and transaminase activity. Has high activity with L-aspartate, and much lower activity with D-aspartate, L-lysine and L-glutamine. The polypeptide is Bifunctional aspartate aminotransferase and L-aspartate beta-decarboxylase (Pseudomonas sp).